The chain runs to 212 residues: Uridine kinase (212 aa).

13–20 (GASASGKS) lines the ATP pocket.

The protein belongs to the uridine kinase family.

It is found in the cytoplasm. The catalysed reaction is uridine + ATP = UMP + ADP + H(+). It carries out the reaction cytidine + ATP = CMP + ADP + H(+). The protein operates within pyrimidine metabolism; CTP biosynthesis via salvage pathway; CTP from cytidine: step 1/3. Its pathway is pyrimidine metabolism; UMP biosynthesis via salvage pathway; UMP from uridine: step 1/1. The polypeptide is Uridine kinase (Shewanella halifaxensis (strain HAW-EB4)).